The chain runs to 190 residues: Elongation factor P (190 aa).

The protein belongs to the elongation factor P family.

The protein resides in the cytoplasm. Its pathway is protein biosynthesis; polypeptide chain elongation. Involved in peptide bond synthesis. Stimulates efficient translation and peptide-bond synthesis on native or reconstituted 70S ribosomes in vitro. Probably functions indirectly by altering the affinity of the ribosome for aminoacyl-tRNA, thus increasing their reactivity as acceptors for peptidyl transferase. This chain is Elongation factor P, found in Bartonella bacilliformis (strain ATCC 35685 / KC583 / Herrer 020/F12,63).